The chain runs to 1034 residues: Presequence protease, mitochondrial (1034 aa).

Residues 1-29 (MLKGGMLSRWKMWSPQYKILRNHLINFKS) constitute a mitochondrion transit peptide. A Zn(2+)-binding site is contributed by His-128. Glu-131 (proton acceptor) is an active-site residue. Residues His-132 and Glu-229 each contribute to the Zn(2+) site.

This sequence belongs to the peptidase M16 family. PreP subfamily. Homodimer. The cofactor is Zn(2+).

It is found in the mitochondrion. Functionally, ATP-independent protease that degrades mitochondrial transit peptides after their cleavage. Also degrades other unstructured peptides. The polypeptide is Presequence protease, mitochondrial (Drosophila melanogaster (Fruit fly)).